Consider the following 482-residue polypeptide: UDP-N-acetylmuramoyl-L-alanyl-D-glutamate--2,6-diaminopimelate ligase (482 aa).

S30 is a UDP-N-acetyl-alpha-D-muramoyl-L-alanyl-D-glutamate binding site. 111–117 lines the ATP pocket; sequence GTNGKTT. Residues 153-154, S180, Q186, and R188 contribute to the UDP-N-acetyl-alpha-D-muramoyl-L-alanyl-D-glutamate site; that span reads TT. Residue K220 is modified to N6-carboxylysine. Residues R378, 402 to 405, G455, and E459 contribute to the meso-2,6-diaminopimelate site; that span reads DNPR. Residues 402–405 carry the Meso-diaminopimelate recognition motif motif; sequence DNPR.

It belongs to the MurCDEF family. MurE subfamily. It depends on Mg(2+) as a cofactor. Carboxylation is probably crucial for Mg(2+) binding and, consequently, for the gamma-phosphate positioning of ATP.

It is found in the cytoplasm. The catalysed reaction is UDP-N-acetyl-alpha-D-muramoyl-L-alanyl-D-glutamate + meso-2,6-diaminopimelate + ATP = UDP-N-acetyl-alpha-D-muramoyl-L-alanyl-gamma-D-glutamyl-meso-2,6-diaminopimelate + ADP + phosphate + H(+). It participates in cell wall biogenesis; peptidoglycan biosynthesis. Its function is as follows. Catalyzes the addition of meso-diaminopimelic acid to the nucleotide precursor UDP-N-acetylmuramoyl-L-alanyl-D-glutamate (UMAG) in the biosynthesis of bacterial cell-wall peptidoglycan. The protein is UDP-N-acetylmuramoyl-L-alanyl-D-glutamate--2,6-diaminopimelate ligase of Bacteroides thetaiotaomicron (strain ATCC 29148 / DSM 2079 / JCM 5827 / CCUG 10774 / NCTC 10582 / VPI-5482 / E50).